A 507-amino-acid polypeptide reads, in one-letter code: Extracellular elastase (507 aa).

A signal peptide spans 1–28; that stretch reads MKNFSKFALTSIAALTVASPLVNTEVDA. A propeptide spanning residues 29–207 is cleaved from the precursor; the sequence is KDKVSATQNI…VVDKLNMIKE (179 aa). Position 347 (Asp-347) interacts with Ca(2+). A Zn(2+)-binding site is contributed by His-351. Glu-352 is an active-site residue. Zn(2+)-binding residues include His-355 and Glu-375. Ca(2+) contacts are provided by Asp-386, Glu-388, Asp-389, Leu-391, Glu-394, Tyr-397, Thr-398, Val-401, and Asp-404. Catalysis depends on His-435, which acts as the Proton donor.

This sequence belongs to the peptidase M4 family. Ca(2+) is required as a cofactor. The cofactor is Zn(2+).

It is found in the secreted. Protease that has a low substrate specificity. Glucagon is preferentially cleaved between aromatic (Phe) and hydrophobic (Val) amino acids. Hydrolyzes casein and elastin. The sequence is that of Extracellular elastase (sepA) from Staphylococcus epidermidis.